A 174-amino-acid polypeptide reads, in one-letter code: Small ribosomal subunit protein uS5 (174 aa).

The S5 DRBM domain occupies 19–82; sequence LREKMVAINR…DEARRKLKKI (64 aa).

This sequence belongs to the universal ribosomal protein uS5 family. In terms of assembly, part of the 30S ribosomal subunit. Contacts proteins S4 and S8.

Functionally, with S4 and S12 plays an important role in translational accuracy. Located at the back of the 30S subunit body where it stabilizes the conformation of the head with respect to the body. In Aromatoleum aromaticum (strain DSM 19018 / LMG 30748 / EbN1) (Azoarcus sp. (strain EbN1)), this protein is Small ribosomal subunit protein uS5.